The following is a 142-amino-acid chain: Large ribosomal subunit protein uL11 (142 aa).

It belongs to the universal ribosomal protein uL11 family. As to quaternary structure, part of the ribosomal stalk of the 50S ribosomal subunit. Interacts with L10 and the large rRNA to form the base of the stalk. L10 forms an elongated spine to which L12 dimers bind in a sequential fashion forming a multimeric L10(L12)X complex. In terms of processing, one or more lysine residues are methylated.

Functionally, forms part of the ribosomal stalk which helps the ribosome interact with GTP-bound translation factors. The protein is Large ribosomal subunit protein uL11 of Klebsiella pneumoniae (strain 342).